The sequence spans 90 residues: UPF0237 protein BL1209.1 (90 aa).

Positions 5 to 79 (IITVVGQDTV…DDIGVRIRCQ (75 aa)) constitute an ACT domain.

The protein belongs to the UPF0237 family.

The polypeptide is UPF0237 protein BL1209.1 (Bifidobacterium longum (strain NCC 2705)).